We begin with the raw amino-acid sequence, 178 residues long: Mediator of RNA polymerase II transcription subunit 28 (178 aa).

Residues 1-44 are disordered; it reads MAAPLGGMFSGQPPGPPQAPPGLPGQASLLQAAPGAPRPSSSTL. The segment covering 13-23 has biased composition (pro residues); the sequence is PPGPPQAPPGL. Residues 109–145 adopt a coiled-coil conformation; it reads QVIKEDVSELRNELQRKDALVQKHLTKLRHWQQVLED.

It belongs to the Mediator complex subunit 28 family. As to quaternary structure, component of the Mediator complex, which is composed of MED1, MED4, MED6, MED7, MED8, MED9, MED10, MED11, MED12, MED13, MED13L, MED14, MED15, MED16, MED17, MED18, MED19, MED20, MED21, MED22, MED23, MED24, MED25, MED26, MED27, MED29, MED30, MED31, CCNC, CDK8 and CDC2L6/CDK11. The MED12, MED13, CCNC and CDK8 subunits form a distinct module termed the CDK8 module. Mediator containing the CDK8 module is less active than Mediator lacking this module in supporting transcriptional activation. Individual preparations of the Mediator complex lacking one or more distinct subunits have been variously termed ARC, CRSP, DRIP, PC2, SMCC and TRAP. Forms a ternary complex with NF2/merlin and GRB2. Binds to actin. In terms of tissue distribution, widely expressed. Highly expressed in vascular tissues such as placenta, testis and liver.

The protein resides in the nucleus. It localises to the cytoplasm. The protein localises to the membrane. Component of the Mediator complex, a coactivator involved in the regulated transcription of nearly all RNA polymerase II-dependent genes. Mediator functions as a bridge to convey information from gene-specific regulatory proteins to the basal RNA polymerase II transcription machinery. Mediator is recruited to promoters by direct interactions with regulatory proteins and serves as a scaffold for the assembly of a functional preinitiation complex with RNA polymerase II and the general transcription factors. May be part of a complex containing NF2/merlin that participates in cellular signaling to the actin cytoskeleton downstream of tyrosine kinase signaling pathways. The polypeptide is Mediator of RNA polymerase II transcription subunit 28 (MED28) (Homo sapiens (Human)).